The following is a 336-amino-acid chain: Biotin synthase (336 aa).

Residues 54–281 (NAIQLSTLLS…KAMVRLSAGR (228 aa)) form the Radical SAM core domain. Residues C69, C73, and C76 each contribute to the [4Fe-4S] cluster site. The [2Fe-2S] cluster site is built by C113, C144, C204, and R276.

This sequence belongs to the radical SAM superfamily. Biotin synthase family. In terms of assembly, homodimer. Requires [4Fe-4S] cluster as cofactor. It depends on [2Fe-2S] cluster as a cofactor.

It catalyses the reaction (4R,5S)-dethiobiotin + (sulfur carrier)-SH + 2 reduced [2Fe-2S]-[ferredoxin] + 2 S-adenosyl-L-methionine = (sulfur carrier)-H + biotin + 2 5'-deoxyadenosine + 2 L-methionine + 2 oxidized [2Fe-2S]-[ferredoxin]. It functions in the pathway cofactor biosynthesis; biotin biosynthesis; biotin from 7,8-diaminononanoate: step 2/2. Functionally, catalyzes the conversion of dethiobiotin (DTB) to biotin by the insertion of a sulfur atom into dethiobiotin via a radical-based mechanism. The protein is Biotin synthase of Burkholderia pseudomallei (strain 1106a).